Here is a 1042-residue protein sequence, read N- to C-terminus: Disintegrin and metalloproteinase domain-containing protein unc-71 (1042 aa).

Positions 1 to 23 (MICASKITMLGLLVMCTLGGVLG) are cleaved as a signal peptide. Residues 24 to 746 (KVDIRQTTAN…NIGTTLETAT (723 aa)) lie on the Extracellular side of the membrane. N103 and N155 each carry an N-linked (GlcNAc...) asparagine glycan. The Peptidase M12B domain maps to 227 to 431 (KYVEVALIAD…GNIQCLLNKP (205 aa)). Disulfide bonds link C338–C426, C378–C410, C380–C386, and C496–C516. The Disintegrin domain maps to 437–524 (LRECGNGVVD…DCPPDGHLID (88 aa)). N-linked (GlcNAc...) asparagine glycosylation is present at N538. Positions 662–699 (SATACPTNNLALLCSGHGHCTTTARCVCFNGWSGVACD) constitute an EGF-like domain. 3 disulfides stabilise this stretch: C666/C681, C675/C687, and C689/C698. N703 carries an N-linked (GlcNAc...) asparagine glycan. A helical transmembrane segment spans residues 747–767 (LFAILLGFGVFLLLCLVCLML). At 768-1042 (CYRRRSVVEI…KLEMTNSMHN (275 aa)) the chain is on the cytoplasmic side. 3 disordered regions span residues 779-809 (KPSD…RKRK), 825-850 (DERD…RRNG), and 980-1028 (HDVG…PSLF). Basic and acidic residues predominate over residues 825–836 (DERDSTSLRSRD). A compositionally biased stretch (polar residues) spans 1002–1027 (DSPTLVNGASSSSTSNNYNFRQSPSL).

Its subcellular location is the cell membrane. Its function is as follows. Involved in the migration of sex myoblasts (progenitors of egg-laying muscles), Q neuroblasts and BDU interneurons during development. Involved in axon branching and guidance of neurons including GABAergic type D motor neurons. Promotes sex myoblast migration and positioning independently of gonad attraction cues. May act downstream of mig-13 in order to promote the guidance, migration and positioning of Q neuroblasts and their descendants along the anteroposterior body axis. Required for coordinated movements. This is Disintegrin and metalloproteinase domain-containing protein unc-71 from Caenorhabditis elegans.